The chain runs to 650 residues: Chaperone protein DnaK (650 aa).

Threonine 200 is modified (phosphothreonine; by autocatalysis). A compositionally biased stretch (low complexity) spans 611–634 (AQQAGAAGAAGAAAEGASAQGGAQ). The interval 611 to 650 (AQQAGAAGAAGAAAEGASAQGGAQPPDDVVDADFKEVKKD) is disordered.

Belongs to the heat shock protein 70 family.

Functionally, acts as a chaperone. The chain is Chaperone protein DnaK from Burkholderia pseudomallei (strain 1710b).